The sequence spans 472 residues: Cysteine--tRNA ligase (472 aa).

A Zn(2+)-binding site is contributed by cysteine 27. Positions proline 29 to asparagine 39 match the 'HIGH' region motif. The Zn(2+) site is built by cysteine 214, histidine 239, and glutamate 243. Residues lysine 271–serine 275 carry the 'KMSKS' region motif. Lysine 274 contacts ATP.

This sequence belongs to the class-I aminoacyl-tRNA synthetase family. Monomer. Zn(2+) is required as a cofactor.

It localises to the cytoplasm. The enzyme catalyses tRNA(Cys) + L-cysteine + ATP = L-cysteinyl-tRNA(Cys) + AMP + diphosphate. In Lachnospira eligens (strain ATCC 27750 / DSM 3376 / VPI C15-48 / C15-B4) (Eubacterium eligens), this protein is Cysteine--tRNA ligase.